The chain runs to 536 residues: 2-isopropylmalate synthase (536 aa).

Residues I8–V269 enclose the Pyruvate carboxyltransferase domain. 4 residues coordinate Mn(2+): D17, H208, H210, and N244. The interval R408 to S536 is regulatory domain.

The protein belongs to the alpha-IPM synthase/homocitrate synthase family. LeuA type 1 subfamily. Homodimer. Requires Mn(2+) as cofactor.

It is found in the cytoplasm. It carries out the reaction 3-methyl-2-oxobutanoate + acetyl-CoA + H2O = (2S)-2-isopropylmalate + CoA + H(+). The protein operates within amino-acid biosynthesis; L-leucine biosynthesis; L-leucine from 3-methyl-2-oxobutanoate: step 1/4. Functionally, catalyzes the condensation of the acetyl group of acetyl-CoA with 3-methyl-2-oxobutanoate (2-ketoisovalerate) to form 3-carboxy-3-hydroxy-4-methylpentanoate (2-isopropylmalate). The sequence is that of 2-isopropylmalate synthase from Gloeothece citriformis (strain PCC 7424) (Cyanothece sp. (strain PCC 7424)).